Here is a 195-residue protein sequence, read N- to C-terminus: Myelin-associated neurite-outgrowth inhibitor (195 aa).

M1 is subject to N-acetylmethionine. Residues 1-18 are Cytoplasmic-facing; that stretch reads MNPVYSPGSSGVPYANAK. S6 carries the phosphoserine modification. The helical transmembrane segment at 19 to 42 threads the bilayer; it reads GIGYPAGFPMGYAAAAPAYSPNMY. Topologically, residues 43–142 are extracellular; it reads PGANPTFQAG…PAPLPPPRGN (100 aa). Residue N46 is glycosylated (N-linked (GlcNAc...) asparagine). Residues 143-164 form a helical membrane-spanning segment; the sequence is GVTMGMVAGTTMAMSAGTLLTA. Residues 165 to 195 lie on the Cytoplasmic side of the membrane; it reads HSPTPVAPHPVTVPTYRAPGTPTYSYVPPQW.

It belongs to the FAM168 family. As to quaternary structure, may form homodimers. May interact with DAZAP2, FAM168A, PRDX6, RBM6, TMTC1 and YPEL2. Interacts with CDC27. Post-translationally, N-glycosylated.

It is found in the cytoplasm. The protein resides in the perinuclear region. Its subcellular location is the cell membrane. It localises to the cell projection. The protein localises to the axon. Inhibitor of neuronal axonal outgrowth. Acts as a negative regulator of CDC42 and STAT3 and a positive regulator of STMN2. Positive regulator of CDC27. The chain is Myelin-associated neurite-outgrowth inhibitor (FAM168B) from Bos taurus (Bovine).